We begin with the raw amino-acid sequence, 116 residues long: Small ribosomal subunit protein uS13 (116 aa).

A disordered region spans residues 92–116; sequence RRGLPVRGQNTKNNARTRKGAKRSR. Residues 106 to 116 are compositionally biased toward basic residues; sequence ARTRKGAKRSR.

The protein belongs to the universal ribosomal protein uS13 family. Part of the 30S ribosomal subunit. Forms a loose heterodimer with protein S19. Forms two bridges to the 50S subunit in the 70S ribosome.

Located at the top of the head of the 30S subunit, it contacts several helices of the 16S rRNA. In the 70S ribosome it contacts the 23S rRNA (bridge B1a) and protein L5 of the 50S subunit (bridge B1b), connecting the 2 subunits; these bridges are implicated in subunit movement. Contacts the tRNAs in the A and P-sites. The polypeptide is Small ribosomal subunit protein uS13 (Lactobacillus delbrueckii subsp. bulgaricus (strain ATCC 11842 / DSM 20081 / BCRC 10696 / JCM 1002 / NBRC 13953 / NCIMB 11778 / NCTC 12712 / WDCM 00102 / Lb 14)).